The chain runs to 353 residues: Photosystem II protein D1 (353 aa).

Position 2 is an N-acetylthreonine (T2). Residue T2 is modified to Phosphothreonine. Helical transmembrane passes span 29–46, 118–133, and 142–156; these read YIGW…TATS, HFLL…EWEL, and WIAV…AATA. Position 118 (H118) interacts with chlorophyll a. A pheophytin a-binding site is contributed by Y126. Positions 170 and 189 each coordinate [CaMn4O5] cluster. Residues 197–218 traverse the membrane as a helical segment; sequence FHMLGVAGVFGGSLFSAMHGSL. H198 is a chlorophyll a binding site. A quinone contacts are provided by residues H215 and 264–265; that span reads SF. H215 is a Fe cation binding site. A Fe cation-binding site is contributed by H272. A helical transmembrane segment spans residues 274–288; the sequence is FLAAWPVVGIWFTAL. 3 residues coordinate [CaMn4O5] cluster: H332, E333, and A344. Positions 345–353 are excised as a propeptide; the sequence is AIEAPAVNG.

This sequence belongs to the reaction center PufL/M/PsbA/D family. In terms of assembly, PSII is composed of 1 copy each of membrane proteins PsbA, PsbB, PsbC, PsbD, PsbE, PsbF, PsbH, PsbI, PsbJ, PsbK, PsbL, PsbM, PsbT, PsbX, PsbY, PsbZ, Psb30/Ycf12, at least 3 peripheral proteins of the oxygen-evolving complex and a large number of cofactors. It forms dimeric complexes. It depends on The D1/D2 heterodimer binds P680, chlorophylls that are the primary electron donor of PSII, and subsequent electron acceptors. It shares a non-heme iron and each subunit binds pheophytin, quinone, additional chlorophylls, carotenoids and lipids. D1 provides most of the ligands for the Mn4-Ca-O5 cluster of the oxygen-evolving complex (OEC). There is also a Cl(-1) ion associated with D1 and D2, which is required for oxygen evolution. The PSII complex binds additional chlorophylls, carotenoids and specific lipids. as a cofactor. In terms of processing, tyr-161 forms a radical intermediate that is referred to as redox-active TyrZ, YZ or Y-Z. Post-translationally, C-terminally processed by CTPA; processing is essential to allow assembly of the oxygen-evolving complex and thus photosynthetic growth.

It localises to the plastid. The protein localises to the chloroplast thylakoid membrane. It catalyses the reaction 2 a plastoquinone + 4 hnu + 2 H2O = 2 a plastoquinol + O2. In terms of biological role, photosystem II (PSII) is a light-driven water:plastoquinone oxidoreductase that uses light energy to abstract electrons from H(2)O, generating O(2) and a proton gradient subsequently used for ATP formation. It consists of a core antenna complex that captures photons, and an electron transfer chain that converts photonic excitation into a charge separation. The D1/D2 (PsbA/PsbD) reaction center heterodimer binds P680, the primary electron donor of PSII as well as several subsequent electron acceptors. The protein is Photosystem II protein D1 of Conocephalum japonicum (Liverwort).